Reading from the N-terminus, the 312-residue chain is Pantothenate kinase (312 aa).

Residue 97–104 (GSVAVGKS) participates in ATP binding.

The protein belongs to the prokaryotic pantothenate kinase family.

The protein resides in the cytoplasm. The enzyme catalyses (R)-pantothenate + ATP = (R)-4'-phosphopantothenate + ADP + H(+). It functions in the pathway cofactor biosynthesis; coenzyme A biosynthesis; CoA from (R)-pantothenate: step 1/5. This chain is Pantothenate kinase, found in Corynebacterium glutamicum (strain ATCC 13032 / DSM 20300 / JCM 1318 / BCRC 11384 / CCUG 27702 / LMG 3730 / NBRC 12168 / NCIMB 10025 / NRRL B-2784 / 534).